The following is a 642-amino-acid chain: RNA polymerase sigma factor RpoD (642 aa).

The interval His-199–Glu-228 is disordered. The span at Asn-212–Glu-228 shows a compositional bias: acidic residues. Positions Met-403–Thr-473 are sigma-70 factor domain-2. The Interaction with polymerase core subunit RpoC signature appears at Asp-427–Gln-430. The interval Glu-482–Ala-558 is sigma-70 factor domain-3. The interval Ile-571–His-624 is sigma-70 factor domain-4. The segment at residues Leu-597–Ala-616 is a DNA-binding region (H-T-H motif).

Belongs to the sigma-70 factor family. RpoD/SigA subfamily. In terms of assembly, interacts transiently with the RNA polymerase catalytic core.

The protein localises to the cytoplasm. Its function is as follows. Sigma factors are initiation factors that promote the attachment of RNA polymerase to specific initiation sites and are then released. This sigma factor is the primary sigma factor during exponential growth. This Neisseria gonorrhoeae protein is RNA polymerase sigma factor RpoD.